We begin with the raw amino-acid sequence, 93 residues long: MDGIKYAVFTDKSIRLLGKNQYTSNVESGSTRTEIKHWVELFFGVKVIAMNSHRLPGRGRRMGPIMGQTMHYRRMIITLQPGYSIPPLRKKRT.

The protein belongs to the universal ribosomal protein uL23 family. As to quaternary structure, part of the 50S ribosomal subunit.

The protein resides in the plastid. It is found in the chloroplast. Binds to 23S rRNA. The protein is Large ribosomal subunit protein uL23cz/uL23cy (rpl23-A) of Panax ginseng (Korean ginseng).